The chain runs to 633 residues: Chaperone protein HtpG (633 aa).

Residues 1 to 341 (MSATSSKETL…SADLPLNVSR (341 aa)) are a; substrate-binding. Residues 342–558 (EILQSSRDID…EGDMSANLER (217 aa)) are b. The tract at residues 559–633 (LLKAAGQAAP…LNGLLAMLPG (75 aa)) is c.

The protein belongs to the heat shock protein 90 family. In terms of assembly, homodimer.

It is found in the cytoplasm. In terms of biological role, molecular chaperone. Has ATPase activity. In Thiobacillus denitrificans (strain ATCC 25259 / T1), this protein is Chaperone protein HtpG.